A 1417-amino-acid polypeptide reads, in one-letter code: DExH-box ATP-dependent RNA helicase DExH4, chloroplastic (1417 aa).

The span at M1–Q12 shows a compositional bias: basic residues. The disordered stretch occupies residues M1 to L37. The N-terminal 61 residues, M1–T61, are a transit peptide targeting the chloroplast. A Helicase ATP-binding domain is found at L607–Q781. G620–T627 is a binding site for ATP. A DEIH box motif is present at residues D722 to H725. Residues L868–G1043 enclose the Helicase C-terminal domain.

Belongs to the DExH box helicase family.

The protein localises to the plastid. Its subcellular location is the chloroplast. It catalyses the reaction ATP + H2O = ADP + phosphate + H(+). The chain is DExH-box ATP-dependent RNA helicase DExH4, chloroplastic from Arabidopsis thaliana (Mouse-ear cress).